Consider the following 578-residue polypeptide: MDVCSKNSNRTAPVSEGGIRRADVPLCSRTNGWSWPPHPFQFLAWLLYLYFAVTGFGVFVPLLPTHWIPAGYICTGITFVCHLFMHLMAVSIDPADYNVRAKSYKGPMPVFDRTKHAHVIENCHCYLCEVDVGPKSKHCSACNKCVASFDHHCRWLNNCVGSRNYWLFLNSVISALLGIVLVVVIASYVFIEFFLDPSKLRSDKHFQQVRNESVVWFVFLPVAPVTTAGPAIPALAGVTIALGLLSALLLGHLLCFHIYLMWNRLSTYEYIVRQRHRQEAGDSRKPPPENDSGVPKLNLIKQQVSYSGTLGYTNPEMEVEDPKAMTSQEGAARYGNGRIRCSSEHMDEEEHLPSVLTEQKASPHPHKHAQKKKRKVRKLAAEVNGDISIDTSTAKGLQKTSAEKESSVAAATVSSSLGQRLPFPAFPLRASLPPLAPVQAAGPPAEYHSDSAESLEEIPVAMARLGSAALAGAQIPTTTATASSSYSSMLQCALPSSAAGHAAPSPQPRTKRKTAARTVSEQRFEMLYHNPSMFMTRESGEPAIPPEESPRAAKRKQTGKKRNTEDAKPSSRVGTSLA.

Over 1-41 (MDVCSKNSNRTAPVSEGGIRRADVPLCSRTNGWSWPPHPFQ) the chain is Cytoplasmic. A helical membrane pass occupies residues 42–62 (FLAWLLYLYFAVTGFGVFVPL). The Lumenal segment spans residues 63-71 (LPTHWIPAG). The chain crosses the membrane as a helical span at residues 72 to 92 (YICTGITFVCHLFMHLMAVSI). Residues 93-174 (DPADYNVRAK…YWLFLNSVIS (82 aa)) lie on the Cytoplasmic side of the membrane. The region spanning 121–173 (ENCHCYLCEVDVGPKSKHCSACNKCVASFDHHCRWLNNCVGSRNYWLFLNSVI) is the DHHC domain. Catalysis depends on cysteine 153, which acts as the S-palmitoyl cysteine intermediate. A helical membrane pass occupies residues 175–195 (ALLGIVLVVVIASYVFIEFFL). Over 196–230 (DPSKLRSDKHFQQVRNESVVWFVFLPVAPVTTAGP) the chain is Lumenal. The helical transmembrane segment at 231 to 251 (AIPALAGVTIALGLLSALLLG) threads the bilayer. Topologically, residues 252-578 (HLLCFHIYLM…PSSRVGTSLA (327 aa)) are cytoplasmic. The span at 278–288 (QEAGDSRKPPP) shows a compositional bias: basic and acidic residues. Disordered regions lie at residues 278 to 298 (QEAG…PKLN), 345 to 376 (HMDE…KRKV), 497 to 517 (SAAG…TAAR), and 532 to 578 (SMFM…TSLA). Over residues 363–376 (PHPHKHAQKKKRKV) the composition is skewed to basic residues. The segment covering 552–561 (AAKRKQTGKK) has biased composition (basic residues).

This sequence belongs to the DHHC palmitoyltransferase family.

It is found in the endosome membrane. The protein resides in the endoplasmic reticulum membrane. The protein localises to the golgi apparatus. It catalyses the reaction L-cysteinyl-[protein] + hexadecanoyl-CoA = S-hexadecanoyl-L-cysteinyl-[protein] + CoA. Functionally, palmitoyltransferase that catalyzes the addition of palmitate onto various protein substrates, such as ncdn and nlrp3. The sequence is that of Palmitoyltransferase ZDHHC1 from Danio rerio (Zebrafish).